The sequence spans 384 residues: Succinyl-diaminopimelate desuccinylase (384 aa).

A Zn(2+)-binding site is contributed by His-69. Asp-71 is a catalytic residue. Asp-103 contacts Zn(2+). Glu-137 serves as the catalytic Proton acceptor. Residues Glu-138, Glu-166, and His-355 each contribute to the Zn(2+) site.

It belongs to the peptidase M20A family. DapE subfamily. As to quaternary structure, homodimer. The cofactor is Zn(2+). Requires Co(2+) as cofactor.

It catalyses the reaction N-succinyl-(2S,6S)-2,6-diaminopimelate + H2O = (2S,6S)-2,6-diaminopimelate + succinate. The protein operates within amino-acid biosynthesis; L-lysine biosynthesis via DAP pathway; LL-2,6-diaminopimelate from (S)-tetrahydrodipicolinate (succinylase route): step 3/3. Its function is as follows. Catalyzes the hydrolysis of N-succinyl-L,L-diaminopimelic acid (SDAP), forming succinate and LL-2,6-diaminopimelate (DAP), an intermediate involved in the bacterial biosynthesis of lysine and meso-diaminopimelic acid, an essential component of bacterial cell walls. This chain is Succinyl-diaminopimelate desuccinylase, found in Rickettsia canadensis (strain McKiel).